The primary structure comprises 619 residues: Probable pectinesterase/pectinesterase inhibitor 25 (619 aa).

Residues 1 to 23 (MKMQTLNFTSSLLFLSFIFLSCA) form the signal peptide. Residues 31 to 84 (SPSQPHSEPPSQLPFEPPVESPFFPPSQPPIFVPPSQPPSLPPSQSQSPSLACK) are disordered. Positions 37-72 (SEPPSQLPFEPPVESPFFPPSQPPIFVPPSQPPSLP) are enriched in pro residues. Positions 73 to 231 (PSQSQSPSLA…TRLYSISLGL (159 aa)) are pectinesterase inhibitor 25. Residues Asn-220, Asn-255, Asn-312, Asn-325, and Asn-364 are each glycosylated (N-linked (GlcNAc...) asparagine). Residues 302 to 601 (AVIVGPFKSD…FTVYNFTMGD (300 aa)) form a pectinesterase 25 region. Thr-380 contacts substrate. Asn-382 is a glycosylation site (N-linked (GlcNAc...) asparagine). Substrate is bound at residue Gln-410. Asp-433 serves as the catalytic Proton donor; for pectinesterase activity. A disulfide bridge links Cys-447 with Cys-467. Catalysis depends on Asp-454, which acts as the Nucleophile; for pectinesterase activity. N-linked (GlcNAc...) asparagine glycosylation is present at Asn-500. 2 residues coordinate substrate: Arg-522 and Trp-524. Asn-550, Asn-591, and Asn-596 each carry an N-linked (GlcNAc...) asparagine glycan.

The protein in the N-terminal section; belongs to the PMEI family. In the C-terminal section; belongs to the pectinesterase family. In terms of tissue distribution, expressed in siliques.

The protein localises to the secreted. It is found in the cell wall. It catalyses the reaction [(1-&gt;4)-alpha-D-galacturonosyl methyl ester](n) + n H2O = [(1-&gt;4)-alpha-D-galacturonosyl](n) + n methanol + n H(+). The protein operates within glycan metabolism; pectin degradation; 2-dehydro-3-deoxy-D-gluconate from pectin: step 1/5. Functionally, acts in the modification of cell walls via demethylesterification of cell wall pectin. The chain is Probable pectinesterase/pectinesterase inhibitor 25 (PME25) from Arabidopsis thaliana (Mouse-ear cress).